The sequence spans 275 residues: Large ribosomal subunit protein uL2 (275 aa).

The interval 216 to 275 (GIRPQTRGSAMNPIDHPHGGGEGKTNSGRHPVTPWGMPTKGYKTRKKKASDKLIISKRKK) is disordered. Residues 257–275 (YKTRKKKASDKLIISKRKK) show a composition bias toward basic residues.

This sequence belongs to the universal ribosomal protein uL2 family. As to quaternary structure, part of the 50S ribosomal subunit. Forms a bridge to the 30S subunit in the 70S ribosome.

Its function is as follows. One of the primary rRNA binding proteins. Required for association of the 30S and 50S subunits to form the 70S ribosome, for tRNA binding and peptide bond formation. It has been suggested to have peptidyltransferase activity; this is somewhat controversial. Makes several contacts with the 16S rRNA in the 70S ribosome. The chain is Large ribosomal subunit protein uL2 from Aliarcobacter butzleri (strain RM4018) (Arcobacter butzleri).